The chain runs to 659 residues: Nitrate import ATP-binding protein NrtC (659 aa).

One can recognise an ABC transporter domain in the interval 5–239 (LAVDHVHQVF…RPRQRLEMME (235 aa)). 42-49 (GHSGCGKS) is an ATP binding site. Positions 255 to 278 (QQQRRAKRRAKAAAPAPAVAASQQ) are linker. The interval 279–659 (KTVRLGFLPG…VAPIPLATSA (381 aa)) is nrtA-like.

It belongs to the ABC transporter superfamily. Nitrate/nitrite/cyanate uptake transporter (NitT) (TC 3.A.1.16) family. The complex is composed of two ATP-binding proteins (NrtC and NrtD), two transmembrane proteins (NrtB) and a solute-binding protein (NrtA).

The protein localises to the cell inner membrane. It carries out the reaction nitrate(out) + ATP + H2O = nitrate(in) + ADP + phosphate + H(+). Its activity is regulated as follows. Transport is inhibited by ammonium. The C-terminal domain of NrtC is involved in the ammonium-promoted inhibition of the nitrate/nitrite transporter. In terms of biological role, part of the ABC transporter complex NrtABCD involved in nitrate uptake. The complex is probably also involved in nitrite transport. Probably responsible for energy coupling to the transport system. The sequence is that of Nitrate import ATP-binding protein NrtC from Synechococcus elongatus (strain ATCC 33912 / PCC 7942 / FACHB-805) (Anacystis nidulans R2).